The chain runs to 187 residues: MSKYLVVGLGNPGLEYEKTKHNVGFMCIDELLKEHTLFLNNSKFNGQFVKVDQPEDQIFIAKPMTYMNNSGEFVYEICKFYKIHEQNILVIYDDIDTDVGKIRVKAKGSSGGQNGIKSIISKMNTEKIKRIRIGIGKPVHNLTHHVLTKFSAEDSIKVQQAIIKAKDACNEFLNHVDFDKIMNKFNV.

Y16 serves as a coordination point for tRNA. The active-site Proton acceptor is the H21. TRNA is bound by residues Y66, N68, and N114.

The protein belongs to the PTH family. In terms of assembly, monomer.

The protein localises to the cytoplasm. The enzyme catalyses an N-acyl-L-alpha-aminoacyl-tRNA + H2O = an N-acyl-L-amino acid + a tRNA + H(+). Its function is as follows. Hydrolyzes ribosome-free peptidyl-tRNAs (with 1 or more amino acids incorporated), which drop off the ribosome during protein synthesis, or as a result of ribosome stalling. Catalyzes the release of premature peptidyl moieties from peptidyl-tRNA molecules trapped in stalled 50S ribosomal subunits, and thus maintains levels of free tRNAs and 50S ribosomes. The sequence is that of Peptidyl-tRNA hydrolase from Malacoplasma penetrans (strain HF-2) (Mycoplasma penetrans).